The following is a 308-amino-acid chain: Phosphoribosylaminoimidazole-succinocarboxamide synthase (308 aa).

This sequence belongs to the SAICAR synthetase family.

The catalysed reaction is 5-amino-1-(5-phospho-D-ribosyl)imidazole-4-carboxylate + L-aspartate + ATP = (2S)-2-[5-amino-1-(5-phospho-beta-D-ribosyl)imidazole-4-carboxamido]succinate + ADP + phosphate + 2 H(+). Its pathway is purine metabolism; IMP biosynthesis via de novo pathway; 5-amino-1-(5-phospho-D-ribosyl)imidazole-4-carboxamide from 5-amino-1-(5-phospho-D-ribosyl)imidazole-4-carboxylate: step 1/2. This chain is Phosphoribosylaminoimidazole-succinocarboxamide synthase, found in Stenotrophomonas maltophilia (strain R551-3).